The chain runs to 725 residues: Catalase-peroxidase (725 aa).

Polar residues-rich tracts occupy residues 1 to 12 and 23 to 32; these read MSTSNDPSNNAS and PKQSAGSGTA. The signal sequence occupies residues 1–20; the sequence is MSTSNDPSNNASAGKCPFHA. The interval 1–35 is disordered; that stretch reads MSTSNDPSNNASAGKCPFHAETPKQSAGSGTANRD. A cross-link (tryptophyl-tyrosyl-methioninium (Trp-Tyr) (with M-252)) is located at residues 105 to 226; it reads WHGAGTYRTV…IGATEMGLIY (122 aa). His-106 functions as the Proton acceptor in the catalytic mechanism. A cross-link (tryptophyl-tyrosyl-methioninium (Tyr-Met) (with W-105)) is located at residues 226–252; sequence YVNPEGPNASGEPLSAAAAIRATFGNM. Residue His-267 participates in heme b binding.

It belongs to the peroxidase family. Peroxidase/catalase subfamily. Homodimer or homotetramer. Requires heme b as cofactor. Post-translationally, formation of the three residue Trp-Tyr-Met cross-link is important for the catalase, but not the peroxidase activity of the enzyme.

It catalyses the reaction H2O2 + AH2 = A + 2 H2O. The enzyme catalyses 2 H2O2 = O2 + 2 H2O. In terms of biological role, bifunctional enzyme with both catalase and broad-spectrum peroxidase activity. The chain is Catalase-peroxidase from Klebsiella pneumoniae subsp. pneumoniae (strain ATCC 700721 / MGH 78578).